A 41-amino-acid polypeptide reads, in one-letter code: Large ribosomal subunit protein bL36 (41 aa).

The protein belongs to the bacterial ribosomal protein bL36 family.

In Ruegeria sp. (strain TM1040) (Silicibacter sp.), this protein is Large ribosomal subunit protein bL36.